Consider the following 71-residue polypeptide: Small ribosomal subunit protein bS21 (71 aa).

Basic residues predominate over residues 48 to 59 (EKASLAKRHAKR). The disordered stretch occupies residues 48–71 (EKASLAKRHAKRNARENARNTRLY). The segment covering 60-71 (NARENARNTRLY) has biased composition (basic and acidic residues).

It belongs to the bacterial ribosomal protein bS21 family.

The sequence is that of Small ribosomal subunit protein bS21 from Actinobacillus pleuropneumoniae serotype 5b (strain L20).